Consider the following 83-residue polypeptide: Bowman-Birk type seed trypsin and chymotrypsin inhibitor (83 aa).

Intrachain disulfides connect cysteine 18/cysteine 72, cysteine 19/cysteine 34, cysteine 22/cysteine 68, cysteine 24/cysteine 32, cysteine 42/cysteine 49, cysteine 46/cysteine 61, and cysteine 51/cysteine 59.

It belongs to the Bowman-Birk serine protease inhibitor family.

In Vigna unguiculata (Cowpea), this protein is Bowman-Birk type seed trypsin and chymotrypsin inhibitor.